The following is a 270-amino-acid chain: Chlorophyll a-b binding protein, chloroplastic (270 aa).

A chloroplast-targeting transit peptide spans 1-41 (MASACASSTIAAVAFSSPSSQKNGSIVGATKASFLGGKRLR). Trp68 is a binding site for chlorophyll b. Positions 88, 107, and 110 each coordinate chlorophyll a. A chlorophyll b-binding site is contributed by Arg112. A helical membrane pass occupies residues 113-133 (WAMLGAAGIFIPEFLTKIGVL). Gln144 contacts chlorophyll a. The chain crosses the membrane as a helical span at residues 146-166 (YFTDTTTLFVIELVLIGWAEG). Residues Val155, Glu165, and Arg168 each contribute to the chlorophyll b site. Chlorophyll a is bound by residues Lys221, Glu222, Asn225, Arg227, Gln239, and His254. Residues 228-248 (LAMLAVMGAWFQHIYTGTGPI) traverse the membrane as a helical segment.

Belongs to the light-harvesting chlorophyll a/b-binding (LHC) protein family. In terms of assembly, the LHC complex consists of chlorophyll a-b binding proteins. It depends on Binds at least 14 chlorophylls (8 Chl-a and 6 Chl-b) and carotenoids such as lutein and neoxanthin. as a cofactor. Post-translationally, photoregulated by reversible phosphorylation of its threonine residues.

It localises to the plastid. Its subcellular location is the chloroplast thylakoid membrane. In terms of biological role, the light-harvesting complex (LHC) functions as a light receptor, it captures and delivers excitation energy to photosystems with which it is closely associated. The chain is Chlorophyll a-b binding protein, chloroplastic from Petunia hybrida (Petunia).